The following is a 352-amino-acid chain: Fc receptor-like A (352 aa).

Positions 1–30 (MKLSCTLTQWALYVCPAVLLATQMLLAASS) are cleaved as a signal peptide. The tract at residues 46 to 65 (CQAAAEEDEGDEDDGDMTQS) is disordered. The segment covering 50–61 (AEEDEGDEDDGD) has biased composition (acidic residues). Ig-like C2-type domains follow at residues 80-169 (PFHL…EAAS) and 182-260 (PVLK…RQIS). 2 disulfide bridges follow: Cys109-Cys153 and Cys202-Cys250. The disordered stretch occupies residues 275 to 310 (KPTASETPPTEALGPLPPPPASSAEQPRFSSPDPHL).

As to quaternary structure, monomer or homodimer; disulfide-linked. As to expression, highly expressed in spleen. Expressed in immature B-cell and B-cell lines.

The protein localises to the cytoplasm. In terms of biological role, may be implicated in B-cell differentiation and lymphomagenesis. In Mus musculus (Mouse), this protein is Fc receptor-like A (Fcrla).